Reading from the N-terminus, the 467-residue chain is Peroxisome proliferator-activated receptor alpha (467 aa).

A DNA-binding region (nuclear receptor) is located at residues 99–173 (NIECRICGDK…VGMSHNAIRF (75 aa)). 2 NR C4-type zinc fingers span residues 102-122 (CRICGDKASGYHYGVHACEGC) and 139-161 (CDRSCKIQKKNRNKCQYCRFHKC). Residues 239–466 (FVIHDMETLC…PLLQEIYRDM (228 aa)) enclose the NR LBD domain. The required for heterodimerization with RXRA stretch occupies residues 304-433 (DQVTLLKYGV…PKLLQKLADL (130 aa)).

It belongs to the nuclear hormone receptor family. NR1 subfamily. As to quaternary structure, heterodimer; with RXRA. This heterodimerization is required for DNA binding and transactivation activity. Interacts with NCOA3 coactivator. Interacts with CITED2; the interaction stimulates its transcriptional activity. Also interacts with PPARBP in vitro. Interacts with AKAP13, LPIN1, PRDM16 and coactivator NCOA6. Interacts with ASXL1 and ASXL2. Interacts with PER2. Interacts with SIRT1; the interaction seems to be modulated by NAD(+) levels. Interacts with CRY1 and CRY2. In hepatocytes, interacts with PAQR3 and HUWE1; the interactions promote PPARA poylubiquitination and HUWE1-mediated degradation. In terms of processing, ubiquitinated by E3 ubiquitin-protein ligase HUWE1; leading to proteasomal degradation. Post-translationally, phosphorylated.

The protein localises to the nucleus. In terms of biological role, ligand-activated transcription factor. Key regulator of lipid metabolism. Activated by the endogenous ligand 1-palmitoyl-2-oleoyl-sn-glycerol-3-phosphocholine (16:0/18:1-GPC). Activated by oleylethanolamide, a naturally occurring lipid that regulates satiety. Receptor for peroxisome proliferators such as hypolipidemic drugs and fatty acids. Regulates the peroxisomal beta-oxidation pathway of fatty acids. Functions as a transcription activator for the ACOX1 and P450 genes. Transactivation activity requires heterodimerization with RXRA and is antagonized by NR2C2. May be required for the propagation of clock information to metabolic pathways regulated by PER2. This chain is Peroxisome proliferator-activated receptor alpha (PPARA), found in Cavia porcellus (Guinea pig).